A 158-amino-acid chain; its full sequence is Pyruvoyl-dependent arginine decarboxylase (158 aa).

A Pyruvic acid (Ser) modification is found at serine 44.

Belongs to the PdaD family. Requires pyruvate as cofactor.

It carries out the reaction L-arginine + H(+) = agmatine + CO2. This is Pyruvoyl-dependent arginine decarboxylase from Thermococcus sibiricus (strain DSM 12597 / MM 739).